Reading from the N-terminus, the 846-residue chain is Homeobox protein 12 (846 aa).

Low complexity-rich tracts occupy residues 78–94 (IIGS…VQAT), 160–170 (PLSSSSTVVPA), 237–249 (GNHN…YNYN), 289–301 (QPQS…QLQP), 309–321 (LQPQ…QSQQ), 331–352 (NNNN…NNNN), 394–443 (NYNQ…SNSN), and 458–482 (NNNN…QQIY). 6 disordered regions span residues 78 to 103 (IIGS…PSSS), 151 to 177 (IVQP…PPSV), 230 to 249 (NGNG…YNYN), 286 to 374 (GTKQ…SSSP), 394 to 482 (NYNQ…QQIY), and 515 to 571 (FKQN…NNQF). Residues 524 to 546 (NNDDDDDDDDDEEEEEEEEDDND) show a composition bias toward acidic residues. A coiled-coil region spans residues 553–604 (SYDEENNNNNNNNNNNNQFKNESIIIGDNYYEIINDRIKSIKQKLHFLEKNS). The span at 559–569 (NNNNNNNNNNN) shows a compositional bias: low complexity. The segment at residues 773–835 (DKKNRRTLND…NKRSREKNQR (63 aa)) is a DNA-binding region (homeobox).

Its subcellular location is the nucleus. Functionally, putative transcription factor. The protein is Homeobox protein 12 (hbx12) of Dictyostelium discoideum (Social amoeba).